Consider the following 240-residue polypeptide: Keratinocyte-associated protein 3 (240 aa).

The next 4 membrane-spanning stretches (helical) occupy residues 21 to 41, 63 to 83, 94 to 114, and 163 to 183; these read VGLA…VLHG, VISV…LLAS, VLLA…LGLL, and ALAL…LSGY.

This sequence belongs to the TMEM54 family. As to expression, expressed in skin, pancreas and keratinocytes.

The protein resides in the membrane. The protein is Keratinocyte-associated protein 3 (KRTCAP3) of Homo sapiens (Human).